Reading from the N-terminus, the 89-residue chain is UPF0147 protein STK_04605 (89 aa).

The protein belongs to the UPF0147 family.

This is UPF0147 protein STK_04605 from Sulfurisphaera tokodaii (strain DSM 16993 / JCM 10545 / NBRC 100140 / 7) (Sulfolobus tokodaii).